The primary structure comprises 77 residues: uncharacterized protein (77 aa).

This is an uncharacterized protein from Escherichia coli (strain K12).